Reading from the N-terminus, the 153-residue chain is Ribosomal RNA large subunit methyltransferase H (153 aa).

S-adenosyl-L-methionine is bound by residues Leu-75, Gly-102, and Leu-121–Met-126.

Belongs to the RNA methyltransferase RlmH family. Homodimer.

It localises to the cytoplasm. The catalysed reaction is pseudouridine(1915) in 23S rRNA + S-adenosyl-L-methionine = N(3)-methylpseudouridine(1915) in 23S rRNA + S-adenosyl-L-homocysteine + H(+). In terms of biological role, specifically methylates the pseudouridine at position 1915 (m3Psi1915) in 23S rRNA. This chain is Ribosomal RNA large subunit methyltransferase H, found in Nitratiruptor sp. (strain SB155-2).